A 45-amino-acid polypeptide reads, in one-letter code: Photosystem II reaction center protein K (45 aa).

A propeptide spanning residues 1–8 is cleaved from the precursor; it reads MEAALLLA. A helical membrane pass occupies residues 24–44; it reads LPIIPVFFLLLAFVWQAAVGF.

Belongs to the PsbK family. As to quaternary structure, PSII is composed of 1 copy each of membrane proteins PsbA, PsbB, PsbC, PsbD, PsbE, PsbF, PsbH, PsbI, PsbJ, PsbK, PsbL, PsbM, PsbT, PsbX, PsbY, PsbZ, Psb30/Ycf12, peripheral proteins PsbO, CyanoQ (PsbQ), PsbU, PsbV and a large number of cofactors. It forms dimeric complexes.

The protein resides in the cellular thylakoid membrane. In terms of biological role, one of the components of the core complex of photosystem II (PSII). PSII is a light-driven water:plastoquinone oxidoreductase that uses light energy to abstract electrons from H(2)O, generating O(2) and a proton gradient subsequently used for ATP formation. It consists of a core antenna complex that captures photons, and an electron transfer chain that converts photonic excitation into a charge separation. The chain is Photosystem II reaction center protein K from Nostoc sp. (strain PCC 7120 / SAG 25.82 / UTEX 2576).